The chain runs to 610 residues: Glutamine--fructose-6-phosphate aminotransferase [isomerizing] (610 aa).

C2 functions as the Nucleophile; for GATase activity in the catalytic mechanism. In terms of domain architecture, Glutamine amidotransferase type-2 spans 2–219 (CGIVGATSER…EGDVADINRT (218 aa)). SIS domains lie at 287–427 (AADI…YRGM) and 459–600 (LAQD…VDQP). Catalysis depends on K605, which acts as the For Fru-6P isomerization activity.

As to quaternary structure, homodimer.

The protein resides in the cytoplasm. The catalysed reaction is D-fructose 6-phosphate + L-glutamine = D-glucosamine 6-phosphate + L-glutamate. Catalyzes the first step in hexosamine metabolism, converting fructose-6P into glucosamine-6P using glutamine as a nitrogen source. In Idiomarina loihiensis (strain ATCC BAA-735 / DSM 15497 / L2-TR), this protein is Glutamine--fructose-6-phosphate aminotransferase [isomerizing].